A 224-amino-acid polypeptide reads, in one-letter code: Phosphoribosylformylglycinamidine synthase subunit PurQ (224 aa).

Residues 2-224 (KIAVIVFPGS…SLLEEGKVKG (223 aa)) form the Glutamine amidotransferase type-1 domain. The Nucleophile role is filled by C86. Catalysis depends on residues H195 and E197.

Part of the FGAM synthase complex composed of 1 PurL, 1 PurQ and 2 PurS subunits.

The protein resides in the cytoplasm. It carries out the reaction N(2)-formyl-N(1)-(5-phospho-beta-D-ribosyl)glycinamide + L-glutamine + ATP + H2O = 2-formamido-N(1)-(5-O-phospho-beta-D-ribosyl)acetamidine + L-glutamate + ADP + phosphate + H(+). The enzyme catalyses L-glutamine + H2O = L-glutamate + NH4(+). The protein operates within purine metabolism; IMP biosynthesis via de novo pathway; 5-amino-1-(5-phospho-D-ribosyl)imidazole from N(2)-formyl-N(1)-(5-phospho-D-ribosyl)glycinamide: step 1/2. Part of the phosphoribosylformylglycinamidine synthase complex involved in the purines biosynthetic pathway. Catalyzes the ATP-dependent conversion of formylglycinamide ribonucleotide (FGAR) and glutamine to yield formylglycinamidine ribonucleotide (FGAM) and glutamate. The FGAM synthase complex is composed of three subunits. PurQ produces an ammonia molecule by converting glutamine to glutamate. PurL transfers the ammonia molecule to FGAR to form FGAM in an ATP-dependent manner. PurS interacts with PurQ and PurL and is thought to assist in the transfer of the ammonia molecule from PurQ to PurL. The polypeptide is Phosphoribosylformylglycinamidine synthase subunit PurQ (Ligilactobacillus salivarius (strain UCC118) (Lactobacillus salivarius)).